We begin with the raw amino-acid sequence, 351 residues long: 4-hydroxy-3-methylbut-2-enyl diphosphate reductase (351 aa).

Cys18 contributes to the [4Fe-4S] cluster binding site. The (2E)-4-hydroxy-3-methylbut-2-enyl diphosphate site is built by His47 and His83. His47 and His83 together coordinate dimethylallyl diphosphate. Positions 47 and 83 each coordinate isopentenyl diphosphate. Cys105 lines the [4Fe-4S] cluster pocket. A (2E)-4-hydroxy-3-methylbut-2-enyl diphosphate-binding site is contributed by His133. Dimethylallyl diphosphate is bound at residue His133. His133 is a binding site for isopentenyl diphosphate. The active-site Proton donor is the Glu135. Thr174 provides a ligand contact to (2E)-4-hydroxy-3-methylbut-2-enyl diphosphate. Residue Cys204 participates in [4Fe-4S] cluster binding. (2E)-4-hydroxy-3-methylbut-2-enyl diphosphate contacts are provided by Ser232, Ser233, Asn234, and Ser277. Positions 232, 233, 234, and 277 each coordinate dimethylallyl diphosphate. The isopentenyl diphosphate site is built by Ser232, Ser233, Asn234, and Ser277.

It belongs to the IspH family. The cofactor is [4Fe-4S] cluster.

It carries out the reaction isopentenyl diphosphate + 2 oxidized [2Fe-2S]-[ferredoxin] + H2O = (2E)-4-hydroxy-3-methylbut-2-enyl diphosphate + 2 reduced [2Fe-2S]-[ferredoxin] + 2 H(+). The enzyme catalyses dimethylallyl diphosphate + 2 oxidized [2Fe-2S]-[ferredoxin] + H2O = (2E)-4-hydroxy-3-methylbut-2-enyl diphosphate + 2 reduced [2Fe-2S]-[ferredoxin] + 2 H(+). It functions in the pathway isoprenoid biosynthesis; dimethylallyl diphosphate biosynthesis; dimethylallyl diphosphate from (2E)-4-hydroxy-3-methylbutenyl diphosphate: step 1/1. It participates in isoprenoid biosynthesis; isopentenyl diphosphate biosynthesis via DXP pathway; isopentenyl diphosphate from 1-deoxy-D-xylulose 5-phosphate: step 6/6. Functionally, catalyzes the conversion of 1-hydroxy-2-methyl-2-(E)-butenyl 4-diphosphate (HMBPP) into a mixture of isopentenyl diphosphate (IPP) and dimethylallyl diphosphate (DMAPP). Acts in the terminal step of the DOXP/MEP pathway for isoprenoid precursor biosynthesis. This chain is 4-hydroxy-3-methylbut-2-enyl diphosphate reductase, found in Bartonella tribocorum (strain CIP 105476 / IBS 506).